Reading from the N-terminus, the 227-residue chain is Protein LppM (227 aa).

A signal peptide spans 1-24; sequence MARTRRRGMLAIAMLLMLVPLATG. Residue Cys-25 is the site of N-palmitoyl cysteine attachment. Residue Cys-25 is the site of S-diacylglycerol cysteine attachment. The important for bacterial uptake by host macrophages stretch occupies residues 26–185; it reads LRVRASITIS…ARYTDPNTRS (160 aa). Residues 190–210 traverse the membrane as a helical segment; it reads GIWLGIAAFAAAGVVAVLAWI.

A shorter form (about 20 kDa) is secreted; upon overexpression of the whole protein in M.smegmatis the C-terminus of the short form is about residue 187, suggesting it is generated by cleavage of the protein before its C-terminal transmembrane domain.

It localises to the membrane. Its subcellular location is the secreted. The protein resides in the cell wall. Functionally, a putative lipoprotein that seems to be specialized for the initial steps of macrophage infection. A non-acylated fragment (residues 26-185) binds phosphatidyl-myo-inositol mannosides (PIMs). Limits, in a TLR2-dependent fashion, bacterial uptake by host (mouse); this effect may be mediated by nonacylated fragment 26-185. Plays a TLR2-dependent role in host phagosome maturation arrest. Plays a TLR2-independent role in chemokine production during the first 24 hours of mouse infection. This is Protein LppM (lppM) from Mycobacterium tuberculosis (strain ATCC 25618 / H37Rv).